A 444-amino-acid polypeptide reads, in one-letter code: Trigger factor (444 aa).

A PPIase FKBP-type domain is found at 160–245 (DMQVTFDFEG…VKQVEKPKLP (86 aa)).

The protein belongs to the FKBP-type PPIase family. Tig subfamily.

It is found in the cytoplasm. The catalysed reaction is [protein]-peptidylproline (omega=180) = [protein]-peptidylproline (omega=0). In terms of biological role, involved in protein export. Acts as a chaperone by maintaining the newly synthesized protein in an open conformation. Functions as a peptidyl-prolyl cis-trans isomerase. This Acinetobacter baumannii (strain AB0057) protein is Trigger factor.